A 632-amino-acid polypeptide reads, in one-letter code: 1-deoxy-D-xylulose-5-phosphate synthase (632 aa).

Thiamine diphosphate-binding positions include His77 and 118 to 120 (GHS). A Mg(2+)-binding site is contributed by Asp149. Thiamine diphosphate is bound by residues 150–151 (GA), Asn178, Tyr289, and Glu372. Asn178 provides a ligand contact to Mg(2+).

It belongs to the transketolase family. DXPS subfamily. In terms of assembly, homodimer. The cofactor is Mg(2+). Requires thiamine diphosphate as cofactor.

The enzyme catalyses D-glyceraldehyde 3-phosphate + pyruvate + H(+) = 1-deoxy-D-xylulose 5-phosphate + CO2. It functions in the pathway metabolic intermediate biosynthesis; 1-deoxy-D-xylulose 5-phosphate biosynthesis; 1-deoxy-D-xylulose 5-phosphate from D-glyceraldehyde 3-phosphate and pyruvate: step 1/1. Functionally, catalyzes the acyloin condensation reaction between C atoms 2 and 3 of pyruvate and glyceraldehyde 3-phosphate to yield 1-deoxy-D-xylulose-5-phosphate (DXP). The sequence is that of 1-deoxy-D-xylulose-5-phosphate synthase from Listeria innocua serovar 6a (strain ATCC BAA-680 / CLIP 11262).